Here is a 375-residue protein sequence, read N- to C-terminus: 23S rRNA (uracil(747)-C(5))-methyltransferase RlmC (375 aa).

Residues Cys-3, Cys-11, Cys-14, and Cys-87 each coordinate [4Fe-4S] cluster. The S-adenosyl-L-methionine site is built by Gln-212, Phe-241, Glu-262, and Asn-307. Residue Cys-334 is the Nucleophile of the active site.

It belongs to the class I-like SAM-binding methyltransferase superfamily. RNA M5U methyltransferase family. RlmC subfamily.

The catalysed reaction is uridine(747) in 23S rRNA + S-adenosyl-L-methionine = 5-methyluridine(747) in 23S rRNA + S-adenosyl-L-homocysteine + H(+). Catalyzes the formation of 5-methyl-uridine at position 747 (m5U747) in 23S rRNA. This is 23S rRNA (uracil(747)-C(5))-methyltransferase RlmC from Xenorhabdus nematophila (strain ATCC 19061 / DSM 3370 / CCUG 14189 / LMG 1036 / NCIMB 9965 / AN6).